Reading from the N-terminus, the 797-residue chain is G-type lectin S-receptor-like serine/threonine-protein kinase SD2-2 (797 aa).

The signal sequence occupies residues 1–23 (MPCTTYLPLLLLLFLLPPPSVQS). The Bulb-type lectin domain occupies 24-139 (KVIIKGNQTI…DGSPVWQSFD (116 aa)). The Extracellular segment spans residues 24–401 (KVIIKGNQTI…KNSKGNISKS (378 aa)). Asn-30, Asn-49, Asn-150, and Asn-197 each carry an N-linked (GlcNAc...) asparagine glycan. The region spanning 274-310 (PEDPCRVYNLCGQLGFCSSELLKPCACIRGFRPRNDA) is the EGF-like; atypical domain. Disulfide bonds link Cys-278/Cys-290, Cys-284/Cys-298, Cys-359/Cys-381, and Cys-363/Cys-369. The PAN domain occupies 321-407 (CRRENGDSGE…ISKSIIILCS (87 aa)). Residues Asn-366 and Asn-397 are each glycosylated (N-linked (GlcNAc...) asparagine). The helical transmembrane segment at 402–422 (IIILCSVVGSISVLGFTLLVP) threads the bilayer. Over 423-797 (LILLKRSRKR…SRSSFGRPSP (375 aa)) the chain is Cytoplasmic. In terms of domain architecture, Protein kinase spans 461-742 (NGFSDKVGHG…TVVKMLEGVV (282 aa)). Residues 467 to 475 (VGHGGFGAV) and Lys-490 each bind ATP. Residues 550–566 (SPKLLSWETRFRIALGT) are caM-binding. The active-site Proton acceptor is the Asp-585. A disordered region spans residues 767 to 797 (GTSCSEGHGCSDLNTGLSSPGSRSSFGRPSP). Over residues 784–797 (SSPGSRSSFGRPSP) the composition is skewed to low complexity.

The protein belongs to the protein kinase superfamily. Ser/Thr protein kinase family. In terms of processing, autophosphorylated. In terms of tissue distribution, expressed in the shoot apex and roots, specifically in lateral roots and at the root-hypocotyl transition zone.

Its subcellular location is the cell membrane. The enzyme catalyses L-seryl-[protein] + ATP = O-phospho-L-seryl-[protein] + ADP + H(+). It catalyses the reaction L-threonyl-[protein] + ATP = O-phospho-L-threonyl-[protein] + ADP + H(+). Serine/threonine-protein kinase. The sequence is that of G-type lectin S-receptor-like serine/threonine-protein kinase SD2-2 (SD22) from Arabidopsis thaliana (Mouse-ear cress).